The primary structure comprises 1308 residues: Chromosome partition protein Smc (1308 aa).

34 to 41 lines the ATP pocket; sequence PNGCGKSN. The tract at residues 115–181 is disordered; that stretch reads AAREASMEEV…VAEGQPSDAQ (67 aa). Residues 137 to 169 are compositionally biased toward low complexity; that stretch reads TEAEATEQQAAPSEGAAPTTEATAPSTENEAAP. The stretch at 278 to 600 forms a coiled coil; sequence ITKYKTKKRL…DTLRAEYATL (323 aa). Positions 637-757 constitute an SMC hinge domain; the sequence is AGVLADFLEV…VPDPAIGREL (121 aa). Coiled coils occupy residues 791 to 1046 and 1110 to 1148; these read SLKR…ELHA and MALEEYKETAQRHEFLETQRKDLLDSIENTQNTIKEIDQ.

The protein belongs to the SMC family. In terms of assembly, homodimer.

The protein localises to the cytoplasm. In terms of biological role, required for chromosome condensation and partitioning. This Koribacter versatilis (strain Ellin345) protein is Chromosome partition protein Smc.